Here is a 203-residue protein sequence, read N- to C-terminus: Nucleoside triphosphate pyrophosphatase (203 aa).

Aspartate 78 (proton acceptor) is an active-site residue.

This sequence belongs to the Maf family. A divalent metal cation serves as cofactor.

It localises to the cytoplasm. The enzyme catalyses a ribonucleoside 5'-triphosphate + H2O = a ribonucleoside 5'-phosphate + diphosphate + H(+). It carries out the reaction a 2'-deoxyribonucleoside 5'-triphosphate + H2O = a 2'-deoxyribonucleoside 5'-phosphate + diphosphate + H(+). In terms of biological role, nucleoside triphosphate pyrophosphatase. May have a dual role in cell division arrest and in preventing the incorporation of modified nucleotides into cellular nucleic acids. The chain is Nucleoside triphosphate pyrophosphatase from Prochlorococcus marinus (strain AS9601).